A 61-amino-acid chain; its full sequence is Large ribosomal subunit protein uL30 (61 aa).

The protein belongs to the universal ribosomal protein uL30 family. As to quaternary structure, part of the 50S ribosomal subunit.

The sequence is that of Large ribosomal subunit protein uL30 from Corynebacterium aurimucosum (strain ATCC 700975 / DSM 44827 / CIP 107346 / CN-1) (Corynebacterium nigricans).